The following is a 391-amino-acid chain: Na(+)/H(+) antiporter NhaA (391 aa).

11 helical membrane-spanning segments follow: residues 14-34 (AGGI…NSPL), 59-79 (LLLW…GLEV), 95-115 (SLPS…YLLF), 124-144 (AGWA…MALL), 154-174 (VFLL…IALF), 177-197 (SDLS…LVGL), 213-233 (LILW…GVII), 261-281 (FLIL…NMSL), 290-310 (IGIA…FSFI), 328-348 (IAPV…IASL), and 363-383 (LGTL…LSKV).

Belongs to the NhaA Na(+)/H(+) (TC 2.A.33) antiporter family.

The protein resides in the cell inner membrane. The catalysed reaction is Na(+)(in) + 2 H(+)(out) = Na(+)(out) + 2 H(+)(in). Its function is as follows. Na(+)/H(+) antiporter that extrudes sodium in exchange for external protons. In Shewanella putrefaciens (strain CN-32 / ATCC BAA-453), this protein is Na(+)/H(+) antiporter NhaA.